The chain runs to 64 residues: Small ribosomal subunit protein eS17 (64 aa).

It belongs to the eukaryotic ribosomal protein eS17 family.

The chain is Small ribosomal subunit protein eS17 from Natronomonas pharaonis (strain ATCC 35678 / DSM 2160 / CIP 103997 / JCM 8858 / NBRC 14720 / NCIMB 2260 / Gabara) (Halobacterium pharaonis).